Here is a 254-residue protein sequence, read N- to C-terminus: Alcohol dehydrogenase 1 (254 aa).

10 to 33 (FVAGLGGIGFDTSREIVKKGPKNL) provides a ligand contact to NAD(+). Ser138 provides a ligand contact to substrate. Residue Tyr151 is the Proton acceptor of the active site.

This sequence belongs to the short-chain dehydrogenases/reductases (SDR) family. In terms of assembly, homodimer.

It carries out the reaction a primary alcohol + NAD(+) = an aldehyde + NADH + H(+). The catalysed reaction is a secondary alcohol + NAD(+) = a ketone + NADH + H(+). The sequence is that of Alcohol dehydrogenase 1 (Adh1) from Drosophila mojavensis (Fruit fly).